Consider the following 195-residue polypeptide: MESSQGRRRRPGTVVPGEAAETDSELSASSSEEELYLGPSGPTRGRPTGLRVAGEAAETDSEPEPEPTVVPVDLPPLVVQRDPAETWGTEETPAMAPARSLLQLRLAESQTRLDHDVAAAVSGVYRRAGRDVAALAGRLAAAQATGLAAAHSVRLARGDLCALAERLDIVAGCRLLPDIRGVPGMEPEQDPGPRA.

Residues 1-11 (MESSQGRRRRP) show a composition bias toward basic residues. Residues 1-72 (MESSQGRRRR…PEPEPTVVPV (72 aa)) form a disordered region. A compositionally biased stretch (low complexity) spans 25–51 (ELSASSSEEELYLGPSGPTRGRPTGLR). Thr-59 is modified (phosphothreonine). A Phosphoserine modification is found at Ser-61.

This sequence belongs to the BLOC1S3 family. Octamer composed of one copy each BLOC1S1, BLOC1S2, BLOC1S3, BLOC1S4, BLOC1S5, BLOC1S6, DTNBP1/BLOC1S7 and SNAPIN/BLOC1S8. Interacts directly with BLOC1S2. Component of the biogenesis of lysosome-related organelles complex 1 (BLOC-1) composed of BLOC1S1, BLOC1S2, BLOC1S3, BLOC1S4, BLOC1S5, BLOC1S6, DTNBP1/BLOC1S7 and SNAPIN/BLOC1S8. The BLOC-1 complex associates with the AP-3 protein complex and membrane protein cargos. Interacts with BLOC1S4, BLOC1S5 and BLOC1S6. Post-translationally, phosphorylated. Ubiquitously expressed.

It localises to the cytoplasm. Functionally, component of the BLOC-1 complex, a complex that is required for normal biogenesis of lysosome-related organelles (LRO), such as platelet dense granules and melanosomes. In concert with the AP-3 complex, the BLOC-1 complex is required to target membrane protein cargos into vesicles assembled at cell bodies for delivery into neurites and nerve terminals. The BLOC-1 complex, in association with SNARE proteins, is also proposed to be involved in neurite extension. Plays a role in intracellular vesicle trafficking. This Mus musculus (Mouse) protein is Biogenesis of lysosome-related organelles complex 1 subunit 3 (Bloc1s3).